Reading from the N-terminus, the 71-residue chain is Sec-independent protein translocase protein TatA (71 aa).

A helical transmembrane segment spans residues methionine 1–glycine 21. The segment at alanine 47–serine 71 is disordered. Residues glutamate 49 to serine 71 show a composition bias toward basic and acidic residues.

Belongs to the TatA/E family. In terms of assembly, the Tat system comprises two distinct complexes: a TatABC complex, containing multiple copies of TatA, TatB and TatC subunits, and a separate TatA complex, containing only TatA subunits. Substrates initially bind to the TatABC complex, which probably triggers association of the separate TatA complex to form the active translocon.

It localises to the cell inner membrane. Functionally, part of the twin-arginine translocation (Tat) system that transports large folded proteins containing a characteristic twin-arginine motif in their signal peptide across membranes. TatA could form the protein-conducting channel of the Tat system. This is Sec-independent protein translocase protein TatA from Chelativorans sp. (strain BNC1).